Reading from the N-terminus, the 410-residue chain is Pyrophosphate--fructose 6-phosphate 1-phosphotransferase (410 aa).

Diphosphate is bound at residue G12. D121 serves as a coordination point for Mg(2+). Substrate is bound by residues 149 to 151 (TID), 194 to 196 (MGR), E266, and 323 to 326 (YFSR). The active-site Proton acceptor is D151.

It belongs to the phosphofructokinase type A (PFKA) family. PPi-dependent PFK group II subfamily. Clade 'P' sub-subfamily. As to quaternary structure, homodimer or homotetramer. Mg(2+) serves as cofactor.

It is found in the cytoplasm. It carries out the reaction beta-D-fructose 6-phosphate + diphosphate = beta-D-fructose 1,6-bisphosphate + phosphate + H(+). It participates in carbohydrate degradation; glycolysis; D-glyceraldehyde 3-phosphate and glycerone phosphate from D-glucose: step 3/4. Its activity is regulated as follows. Non-allosteric. In terms of biological role, catalyzes the phosphorylation of D-fructose 6-phosphate, the first committing step of glycolysis. Uses inorganic phosphate (PPi) as phosphoryl donor instead of ATP like common ATP-dependent phosphofructokinases (ATP-PFKs), which renders the reaction reversible, and can thus function both in glycolysis and gluconeogenesis. Consistently, PPi-PFK can replace the enzymes of both the forward (ATP-PFK) and reverse (fructose-bisphosphatase (FBPase)) reactions. This Mastigamoeba balamuthi (Phreatamoeba balamuthi) protein is Pyrophosphate--fructose 6-phosphate 1-phosphotransferase.